Here is a 383-residue protein sequence, read N- to C-terminus: Dihydroorotase (383 aa).

The Zn(2+) site is built by His47 and His49. Substrate is bound by residues 49–51 and Asn81; that span reads HFR. The Zn(2+) site is built by Lys128, His159, His198, and Asp264. Position 128 is an N6-carboxylysine (Lys128). Asp264 is an active-site residue. Substrate contacts are provided by residues His268 and 280 to 281; that span reads PG.

It belongs to the metallo-dependent hydrolases superfamily. DHOase family. Class I DHOase subfamily. It depends on Zn(2+) as a cofactor.

The enzyme catalyses (S)-dihydroorotate + H2O = N-carbamoyl-L-aspartate + H(+). The protein operates within pyrimidine metabolism; UMP biosynthesis via de novo pathway; (S)-dihydroorotate from bicarbonate: step 3/3. Catalyzes the reversible cyclization of carbamoyl aspartate to dihydroorotate. The polypeptide is Dihydroorotase (Pyrobaculum aerophilum (strain ATCC 51768 / DSM 7523 / JCM 9630 / CIP 104966 / NBRC 100827 / IM2)).